The sequence spans 280 residues: ATP synthase gamma chain (280 aa).

This sequence belongs to the ATPase gamma chain family. As to quaternary structure, F-type ATPases have 2 components, CF(1) - the catalytic core - and CF(0) - the membrane proton channel. CF(1) has five subunits: alpha(3), beta(3), gamma(1), delta(1), epsilon(1). CF(0) has three main subunits: a, b and c.

The protein localises to the cell membrane. Produces ATP from ADP in the presence of a proton gradient across the membrane. The gamma chain is believed to be important in regulating ATPase activity and the flow of protons through the CF(0) complex. The sequence is that of ATP synthase gamma chain from Mycoplasma mycoides subsp. mycoides SC (strain CCUG 32753 / NCTC 10114 / PG1).